Consider the following 269-residue polypeptide: Putative imidazole glycerol phosphate synthase subunit hisF2 (269 aa).

Aspartate 133 is an active-site residue.

Belongs to the HisA/HisF family. As to quaternary structure, heterodimer of HisH and HisF.

Its subcellular location is the cytoplasm. The catalysed reaction is 5-[(5-phospho-1-deoxy-D-ribulos-1-ylimino)methylamino]-1-(5-phospho-beta-D-ribosyl)imidazole-4-carboxamide + L-glutamine = D-erythro-1-(imidazol-4-yl)glycerol 3-phosphate + 5-amino-1-(5-phospho-beta-D-ribosyl)imidazole-4-carboxamide + L-glutamate + H(+). It functions in the pathway amino-acid biosynthesis; L-histidine biosynthesis; L-histidine from 5-phospho-alpha-D-ribose 1-diphosphate: step 5/9. Functionally, IGPS catalyzes the conversion of PRFAR and glutamine to IGP, AICAR and glutamate. The HisF subunit catalyzes the cyclization activity that produces IGP and AICAR from PRFAR using the ammonia provided by the HisH subunit. This is Putative imidazole glycerol phosphate synthase subunit hisF2 (hisF2) from Parasynechococcus marenigrum (strain WH8102).